The sequence spans 310 residues: N-acetyl-gamma-glutamyl-phosphate reductase (310 aa).

Cysteine 117 is an active-site residue.

This sequence belongs to the NAGSA dehydrogenase family. Type 2 subfamily.

The protein localises to the cytoplasm. The enzyme catalyses N-acetyl-L-glutamate 5-semialdehyde + phosphate + NADP(+) = N-acetyl-L-glutamyl 5-phosphate + NADPH + H(+). The protein operates within amino-acid biosynthesis; L-arginine biosynthesis; N(2)-acetyl-L-ornithine from L-glutamate: step 3/4. In terms of biological role, catalyzes the NADPH-dependent reduction of N-acetyl-5-glutamyl phosphate to yield N-acetyl-L-glutamate 5-semialdehyde. The sequence is that of N-acetyl-gamma-glutamyl-phosphate reductase from Sinorhizobium medicae (strain WSM419) (Ensifer medicae).